The chain runs to 499 residues: Glycerol kinase (499 aa).

Thr13 contributes to the ADP binding site. Positions 13, 14, and 15 each coordinate ATP. Thr13 serves as a coordination point for sn-glycerol 3-phosphate. An ADP-binding site is contributed by Arg17. Sn-glycerol 3-phosphate-binding residues include Arg83, Glu84, Tyr135, and Asp245. Positions 83, 84, 135, 245, and 246 each coordinate glycerol. Residues Thr267 and Gly310 each coordinate ADP. Residues Thr267, Gly310, Gln314, and Gly411 each contribute to the ATP site. ADP contacts are provided by Gly411 and Asn415.

It belongs to the FGGY kinase family.

The catalysed reaction is glycerol + ATP = sn-glycerol 3-phosphate + ADP + H(+). It participates in polyol metabolism; glycerol degradation via glycerol kinase pathway; sn-glycerol 3-phosphate from glycerol: step 1/1. Inhibited by fructose 1,6-bisphosphate (FBP). Functionally, key enzyme in the regulation of glycerol uptake and metabolism. Catalyzes the phosphorylation of glycerol to yield sn-glycerol 3-phosphate. This is Glycerol kinase from Xanthomonas euvesicatoria pv. vesicatoria (strain 85-10) (Xanthomonas campestris pv. vesicatoria).